A 103-amino-acid chain; its full sequence is UPF0145 protein Rsph17025_2361 (103 aa).

It belongs to the UPF0145 family.

In Cereibacter sphaeroides (strain ATCC 17025 / ATH 2.4.3) (Rhodobacter sphaeroides), this protein is UPF0145 protein Rsph17025_2361.